A 356-amino-acid polypeptide reads, in one-letter code: Histidinol-phosphate aminotransferase (356 aa).

Lys211 is subject to N6-(pyridoxal phosphate)lysine.

This sequence belongs to the class-II pyridoxal-phosphate-dependent aminotransferase family. Histidinol-phosphate aminotransferase subfamily. Homodimer. Pyridoxal 5'-phosphate is required as a cofactor.

It catalyses the reaction L-histidinol phosphate + 2-oxoglutarate = 3-(imidazol-4-yl)-2-oxopropyl phosphate + L-glutamate. It participates in amino-acid biosynthesis; L-histidine biosynthesis; L-histidine from 5-phospho-alpha-D-ribose 1-diphosphate: step 7/9. In Blochmanniella floridana, this protein is Histidinol-phosphate aminotransferase.